Reading from the N-terminus, the 200-residue chain is Late embryogenesis abundant protein 19 (200 aa).

Disordered stretches follow at residues 1–145 (MASH…KTGS) and 172–200 (TEDE…ARDH). Basic and acidic residues-rich tracts occupy residues 13–23 (GETKAHTEEKA), 30–42 (SKDK…DRAS), 53–81 (QDTK…KDKT), 88–97 (ARDKAAESKD), and 105–114 (EKTEQAKQKA). A coiled-coil region spans residues 52–81 (GQDTKEATKEKAQAAKERASETAQAAKDKT). Composition is skewed to low complexity over residues 115-130 (AETA…ETAQ) and 186-200 (TSAT…ARDH).

This sequence belongs to the LEA type 4 family.

Its function is as follows. Involved in response to stress. In Oryza sativa subsp. japonica (Rice), this protein is Late embryogenesis abundant protein 19.